Consider the following 843-residue polypeptide: Respiratory burst oxidase homolog protein B (843 aa).

Residues 1–10 are compositionally biased toward acidic residues; the sequence is MREEEMESSS. Positions 1-27 are disordered; the sequence is MREEEMESSSEGETNKISRCKATGSDN. The Cytoplasmic portion of the chain corresponds to 1 to 297; it reads MREEEMESSS…SYFFLENWKR (297 aa). 2 EF-hand-like regions span residues 114-122 and 148-159; these read AVEGKLPKS and RGTTSSSITKTE. 2 consecutive EF-hand domains span residues 171–206 and 215–250; these read SFDD…SASA and NVDE…VPSQ. Ca(2+) is bound by residues aspartate 184, asparagine 186, aspartate 188, arginine 190, and glutamate 195. Serine 268 carries the post-translational modification Phosphoserine. A helical membrane pass occupies residues 298-318; the sequence is IWVLTLWISICITLFTWKFLQ. The Extracellular portion of the chain corresponds to 319-383; sequence YKRKTVFEVM…FDDNINFHKV (65 aa). Residues 336–495 enclose the Ferric oxidoreductase domain; the sequence is KGSAETLKFN…LFVIVYVLLI (160 aa). A helical transmembrane segment spans residues 384–404; sequence VAFGIAVGIGLHAISHLACDF. Residues 405–439 are Cytoplasmic-facing; it reads PRLLHAKNVEFEPMKKFFGDERPENYGWFMKGTDG. A helical membrane pass occupies residues 440–460; the sequence is WTGVTMVVLMLVAYVLAQSWF. The Extracellular portion of the chain corresponds to 461-482; sequence RRNRANLPKSLKRLTGFNAFWY. A helical transmembrane segment spans residues 483–503; it reads SHHLFVIVYVLLIVHGYFVYL. Residues 504 to 511 lie on the Cytoplasmic side of the membrane; the sequence is SKEWYHKT. Residues 512–529 form a helical membrane-spanning segment; that stretch reads TWMYLAVPVLLYAFERLI. At 530 to 659 the chain is on the extracellular side; it reads RAFRPGAKAV…PYGAPAQDYR (130 aa). Residues 534–657 enclose the FAD-binding FR-type domain; it reads PGAKAVKVLK…DGPYGAPAQD (124 aa). The helical transmembrane segment at 660-680 threads the bilayer; it reads NYDVLLLVGLGIGATPLISII. The Cytoplasmic portion of the chain corresponds to 681–843; the sequence is RDVLNNIKNQ…TKFEFHKENF (163 aa).

This sequence belongs to the RBOH (TC 5.B.1.3) family. As to quaternary structure, monomer and homodimer.

The protein resides in the membrane. Calcium-dependent NADPH oxidase that generates superoxide. This Arabidopsis thaliana (Mouse-ear cress) protein is Respiratory burst oxidase homolog protein B (RBOHB).